A 148-amino-acid polypeptide reads, in one-letter code: Ribonuclease pancreatic (148 aa).

Residues 1–25 form the signal peptide; sequence MGLEKSLLLLPLLVLVLGCVQPSLG. Substrate contacts are provided by lysine 32 and arginine 35. Histidine 37 acts as the Proton acceptor in catalysis. Disulfide bonds link cysteine 50/cysteine 108, cysteine 64/cysteine 119, cysteine 82/cysteine 134, and cysteine 89/cysteine 96. Residues 65–69 and lysine 90 each bind substrate; that span reads KPVNT. Catalysis depends on histidine 143, which acts as the Proton donor.

This sequence belongs to the pancreatic ribonuclease family. In terms of assembly, monomer. Interacts with and forms tight 1:1 complexes with RNH1. Dimerization of two such complexes may occur. Interaction with RNH1 inhibits this protein. Pancreas.

It localises to the secreted. It carries out the reaction an [RNA] containing cytidine + H2O = an [RNA]-3'-cytidine-3'-phosphate + a 5'-hydroxy-ribonucleotide-3'-[RNA].. It catalyses the reaction an [RNA] containing uridine + H2O = an [RNA]-3'-uridine-3'-phosphate + a 5'-hydroxy-ribonucleotide-3'-[RNA].. Functionally, endonuclease that catalyzes the cleavage of RNA on the 3' side of pyrimidine nucleotides. Acts on single-stranded and double-stranded RNA. This is Ribonuclease pancreatic (RNASE1) from Gerbillus nigeriae (Nigerian gerbil).